We begin with the raw amino-acid sequence, 228 residues long: Lipoprotein-releasing system ATP-binding protein LolD (228 aa).

The ABC transporter domain occupies 7–228 (LNCQNLTKDY…MQDGVLRPEM (222 aa)). Position 43 to 50 (43 to 50 (GSSGSGKS)) interacts with ATP.

It belongs to the ABC transporter superfamily. Lipoprotein translocase (TC 3.A.1.125) family. The complex is composed of two ATP-binding proteins (LolD) and two transmembrane proteins (LolC and LolE).

It localises to the cell inner membrane. Part of the ABC transporter complex LolCDE involved in the translocation of mature outer membrane-directed lipoproteins, from the inner membrane to the periplasmic chaperone, LolA. Responsible for the formation of the LolA-lipoprotein complex in an ATP-dependent manner. The sequence is that of Lipoprotein-releasing system ATP-binding protein LolD from Mannheimia succiniciproducens (strain KCTC 0769BP / MBEL55E).